Reading from the N-terminus, the 253-residue chain is uncharacterized protein (253 aa).

This is an uncharacterized protein from Escherichia coli O6:H1 (strain CFT073 / ATCC 700928 / UPEC).